We begin with the raw amino-acid sequence, 207 residues long: Peptidyl-tRNA hydrolase (207 aa).

Residue tyrosine 17 coordinates tRNA. Histidine 22 acts as the Proton acceptor in catalysis. TRNA contacts are provided by phenylalanine 68, asparagine 70, and asparagine 116.

Belongs to the PTH family. Monomer.

It localises to the cytoplasm. The catalysed reaction is an N-acyl-L-alpha-aminoacyl-tRNA + H2O = an N-acyl-L-amino acid + a tRNA + H(+). Functionally, hydrolyzes ribosome-free peptidyl-tRNAs (with 1 or more amino acids incorporated), which drop off the ribosome during protein synthesis, or as a result of ribosome stalling. In terms of biological role, catalyzes the release of premature peptidyl moieties from peptidyl-tRNA molecules trapped in stalled 50S ribosomal subunits, and thus maintains levels of free tRNAs and 50S ribosomes. The sequence is that of Peptidyl-tRNA hydrolase from Buchnera aphidicola subsp. Baizongia pistaciae (strain Bp).